Consider the following 292-residue polypeptide: Formamidopyrimidine-DNA glycosylase (292 aa).

Residue Pro2 is the Schiff-base intermediate with DNA of the active site. Catalysis depends on Glu3, which acts as the Proton donor. Lys60 serves as the catalytic Proton donor; for beta-elimination activity. DNA-binding residues include His109, Arg128, and Arg173. The FPG-type zinc-finger motif lies at 258–292 (NVYRRTGRECRKCGNLIERQKITGRSTHWCPNCQK). The Proton donor; for delta-elimination activity role is filled by Arg282.

The protein belongs to the FPG family. In terms of assembly, monomer. Zn(2+) serves as cofactor.

It carries out the reaction Hydrolysis of DNA containing ring-opened 7-methylguanine residues, releasing 2,6-diamino-4-hydroxy-5-(N-methyl)formamidopyrimidine.. The catalysed reaction is 2'-deoxyribonucleotide-(2'-deoxyribose 5'-phosphate)-2'-deoxyribonucleotide-DNA = a 3'-end 2'-deoxyribonucleotide-(2,3-dehydro-2,3-deoxyribose 5'-phosphate)-DNA + a 5'-end 5'-phospho-2'-deoxyribonucleoside-DNA + H(+). Functionally, involved in base excision repair of DNA damaged by oxidation or by mutagenic agents. Acts as a DNA glycosylase that recognizes and removes damaged bases. Has a preference for oxidized purines, such as 7,8-dihydro-8-oxoguanine (8-oxoG). Has AP (apurinic/apyrimidinic) lyase activity and introduces nicks in the DNA strand. Cleaves the DNA backbone by beta-delta elimination to generate a single-strand break at the site of the removed base with both 3'- and 5'-phosphates. This is Formamidopyrimidine-DNA glycosylase from Prochlorococcus marinus (strain MIT 9301).